Here is a 288-residue protein sequence, read N- to C-terminus: 33 kDa chaperonin (288 aa).

Intrachain disulfides connect cysteine 237–cysteine 239 and cysteine 270–cysteine 273.

Belongs to the HSP33 family. Under oxidizing conditions two disulfide bonds are formed involving the reactive cysteines. Under reducing conditions zinc is bound to the reactive cysteines and the protein is inactive.

It is found in the cytoplasm. In terms of biological role, redox regulated molecular chaperone. Protects both thermally unfolding and oxidatively damaged proteins from irreversible aggregation. Plays an important role in the bacterial defense system toward oxidative stress. In Agathobacter rectalis (strain ATCC 33656 / DSM 3377 / JCM 17463 / KCTC 5835 / VPI 0990) (Eubacterium rectale), this protein is 33 kDa chaperonin.